The primary structure comprises 532 residues: Probable G-protein coupled receptor Mth-like 11 (532 aa).

The N-terminal stretch at 1–20 is a signal peptide; sequence MGMFRVEYLLLGILVIGVRS. Residues 21 to 229 are Extracellular-facing; that stretch reads RDIPNCDFFD…VRKSRLSNAS (209 aa). 5 disulfides stabilise this stretch: cysteine 26–cysteine 80, cysteine 82–cysteine 87, cysteine 91–cysteine 184, cysteine 92–cysteine 103, and cysteine 145–cysteine 204. The N-linked (GlcNAc...) asparagine glycan is linked to asparagine 42. Asparagine 110, asparagine 123, asparagine 166, asparagine 195, and asparagine 227 each carry an N-linked (GlcNAc...) asparagine glycan. A helical transmembrane segment spans residues 230–250; sequence IPVKFSSVFFMVITIAAYLWL. The Cytoplasmic portion of the chain corresponds to 251 to 262; the sequence is PKFRSLHGKCCN. A helical membrane pass occupies residues 263-283; sequence LYFICLAITFLLNVISLFGIF. The Extracellular segment spans residues 284–290; that stretch reads ELKTPIC. A helical membrane pass occupies residues 291 to 311; sequence YLTGYAGYFTVMATFLWLSVI. Over 312-339 the chain is Cytoplasmic; the sequence is SFDVWRRFAMRKFQVFYKNKRSSFFNYN. Residues 340-360 form a helical membrane-spanning segment; that stretch reads IIVWSSAGLLTCIIFLVDQFV. Residues 361–386 lie on the Extracellular side of the membrane; it reads ETNLDNPYNPAVGVFSCWIFTNGWSA. Residues 387-407 form a helical membrane-spanning segment; that stretch reads TFYFYAPLAILIILNCASFFL. The Cytoplasmic portion of the chain corresponds to 408–439; sequence TTRYIYVENKQNQKVLNNSEPQKLSRNHANYR. The helical transmembrane segment at 440-460 threads the bilayer; that stretch reads IYFRLFIIMGGSWFLEIIAFI. The Extracellular portion of the chain corresponds to 461 to 469; sequence CEMENMWKP. A helical transmembrane segment spans residues 470-490; it reads LIILNDYINCSQGIIIFVATF. The Cytoplasmic segment spans residues 491-532; sequence CNHEMFRLIRKRIQNRNITSLELTNTSRPVESEKMADVELGK.

The protein belongs to the G-protein coupled receptor 2 family. Mth subfamily.

Its subcellular location is the cell membrane. In Drosophila melanogaster (Fruit fly), this protein is Probable G-protein coupled receptor Mth-like 11 (mthl11).